Here is a 271-residue protein sequence, read N- to C-terminus: Thiazole synthase (271 aa).

The Schiff-base intermediate with DXP role is filled by Lys-95. 1-deoxy-D-xylulose 5-phosphate-binding positions include Gly-156, 182–183, and 204–205; these read AG and NT.

The protein belongs to the ThiG family. As to quaternary structure, homotetramer. Forms heterodimers with either ThiH or ThiS.

The protein resides in the cytoplasm. The enzyme catalyses [ThiS sulfur-carrier protein]-C-terminal-Gly-aminoethanethioate + 2-iminoacetate + 1-deoxy-D-xylulose 5-phosphate = [ThiS sulfur-carrier protein]-C-terminal Gly-Gly + 2-[(2R,5Z)-2-carboxy-4-methylthiazol-5(2H)-ylidene]ethyl phosphate + 2 H2O + H(+). It functions in the pathway cofactor biosynthesis; thiamine diphosphate biosynthesis. Functionally, catalyzes the rearrangement of 1-deoxy-D-xylulose 5-phosphate (DXP) to produce the thiazole phosphate moiety of thiamine. Sulfur is provided by the thiocarboxylate moiety of the carrier protein ThiS. In vitro, sulfur can be provided by H(2)S. This Shewanella amazonensis (strain ATCC BAA-1098 / SB2B) protein is Thiazole synthase.